The primary structure comprises 203 residues: 3-isopropylmalate dehydratase small subunit (203 aa).

This sequence belongs to the LeuD family. LeuD type 1 subfamily. In terms of assembly, heterodimer of LeuC and LeuD.

The catalysed reaction is (2R,3S)-3-isopropylmalate = (2S)-2-isopropylmalate. It participates in amino-acid biosynthesis; L-leucine biosynthesis; L-leucine from 3-methyl-2-oxobutanoate: step 2/4. Catalyzes the isomerization between 2-isopropylmalate and 3-isopropylmalate, via the formation of 2-isopropylmaleate. In Symbiobacterium thermophilum (strain DSM 24528 / JCM 14929 / IAM 14863 / T), this protein is 3-isopropylmalate dehydratase small subunit.